Consider the following 179-residue polypeptide: Large ribosomal subunit protein uL5 (179 aa).

It belongs to the universal ribosomal protein uL5 family. Part of the 50S ribosomal subunit; part of the 5S rRNA/L5/L18/L25 subcomplex. Contacts the 5S rRNA and the P site tRNA. Forms a bridge to the 30S subunit in the 70S ribosome.

This is one of the proteins that bind and probably mediate the attachment of the 5S RNA into the large ribosomal subunit, where it forms part of the central protuberance. In the 70S ribosome it contacts protein S13 of the 30S subunit (bridge B1b), connecting the 2 subunits; this bridge is implicated in subunit movement. Contacts the P site tRNA; the 5S rRNA and some of its associated proteins might help stabilize positioning of ribosome-bound tRNAs. The protein is Large ribosomal subunit protein uL5 of Deinococcus geothermalis (strain DSM 11300 / CIP 105573 / AG-3a).